The sequence spans 528 residues: uncharacterized protein (528 aa).

This is an uncharacterized protein from Giardia intestinalis (Giardia lamblia).